We begin with the raw amino-acid sequence, 427 residues long: Enolase (427 aa).

A (2R)-2-phosphoglycerate-binding site is contributed by Q162. Residue E204 is the Proton donor of the active site. The Mg(2+) site is built by D241, E283, and D310. The (2R)-2-phosphoglycerate site is built by K335, R364, S365, and K386. K335 functions as the Proton acceptor in the catalytic mechanism.

The protein belongs to the enolase family. Mg(2+) serves as cofactor.

The protein resides in the cytoplasm. Its subcellular location is the secreted. It is found in the cell surface. It catalyses the reaction (2R)-2-phosphoglycerate = phosphoenolpyruvate + H2O. Its pathway is carbohydrate degradation; glycolysis; pyruvate from D-glyceraldehyde 3-phosphate: step 4/5. Its function is as follows. Catalyzes the reversible conversion of 2-phosphoglycerate (2-PG) into phosphoenolpyruvate (PEP). It is essential for the degradation of carbohydrates via glycolysis. The protein is Enolase of Mycolicibacterium smegmatis (strain ATCC 700084 / mc(2)155) (Mycobacterium smegmatis).